The sequence spans 115 residues: NADH-ubiquinone oxidoreductase chain 3 (115 aa).

Transmembrane regions (helical) follow at residues 4-24, 55-75, and 86-106; these read IMVI…AFWL, FFLV…LLPI, and TMML…AYEW.

Belongs to the complex I subunit 3 family. As to quaternary structure, core subunit of respiratory chain NADH dehydrogenase (Complex I) which is composed of 45 different subunits. Interacts with TMEM186. Interacts with TMEM242.

Its subcellular location is the mitochondrion inner membrane. It carries out the reaction a ubiquinone + NADH + 5 H(+)(in) = a ubiquinol + NAD(+) + 4 H(+)(out). Functionally, core subunit of the mitochondrial membrane respiratory chain NADH dehydrogenase (Complex I) which catalyzes electron transfer from NADH through the respiratory chain, using ubiquinone as an electron acceptor. Essential for the catalytic activity of complex I. The polypeptide is NADH-ubiquinone oxidoreductase chain 3 (Baiomys taylori (Northern pygmy mouse)).